The primary structure comprises 390 residues: MTAIVEAFGKPHVNVGTIGHVDHGKTTLTAAITKHYGNFVAYDQIDKAPEERKRGITIATAHVEYQTEKRHYAHVDCPGHADYVKNMIVGAAQMDAAILVVSGVDGPMPQTREHILLAKQVGVGYIVVYINKADVADADMIDLVEMEVRELLSKYGFPGDEVPVVVGSALKALEDDSSEYGKKSIDKLMEKLDEYVAVPPRPVDLPFLLPIEDVFSISGRGTVVTGRIEKGEIKTGEEIEIIGLKATQKTICTGVEMFKKLLDKGSAGLNVGILLRGTKREEVERGQVLAKPGTITPHRKFKAEVYILKKEEGGRHTPFFANYQPQFYLRTTDVTGSIKLLDGKEMVMPGDNVSVEVELQVPIAMDKGLRFAIREGGRTVGSGVVSEILE.

The 192-residue stretch at 10–201 folds into the tr-type G domain; sequence KPHVNVGTIG…LDEYVAVPPR (192 aa). The G1 stretch occupies residues 19-26; that stretch reads GHVDHGKT. 19–26 is a GTP binding site; it reads GHVDHGKT. T26 is a binding site for Mg(2+). A G2 region spans residues 55–59; it reads GITIA. Residues 76–79 are G3; that stretch reads DCPG. GTP contacts are provided by residues 76–80 and 131–134; these read DCPGH and NKAD. The interval 131–134 is G4; the sequence is NKAD. Residues 168–170 are G5; the sequence is SAL.

It belongs to the TRAFAC class translation factor GTPase superfamily. Classic translation factor GTPase family. EF-Tu/EF-1A subfamily. As to quaternary structure, monomer.

The protein localises to the cytoplasm. It catalyses the reaction GTP + H2O = GDP + phosphate + H(+). In terms of biological role, GTP hydrolase that promotes the GTP-dependent binding of aminoacyl-tRNA to the A-site of ribosomes during protein biosynthesis. The protein is Elongation factor Tu 2 of Wolbachia pipientis wMel.